A 68-amino-acid polypeptide reads, in one-letter code: Copper transport protein ATOX1 (68 aa).

In terms of domain architecture, HMA spans 1 to 63; sequence MPKHEFSVDM…TLNKTGKAVS (63 aa). The Cu cation site is built by cysteine 12 and cysteine 15. Serine 47 carries the phosphoserine modification. Lysine 60 carries the N6-acetyllysine modification.

It belongs to the ATX1 family. In terms of assembly, homodimer. Interacts with ATP7B. Interacts with ATP7A. Interacts (via dimer form) with SLC31A1 (via C-terminal domain); this interaction improves ATOX1 stability and controls intracellular Cu(I) levels.

Binds and deliver cytosolic copper to the copper ATPase proteins. May be important in cellular antioxidant defense. This Rattus norvegicus (Rat) protein is Copper transport protein ATOX1.